The primary structure comprises 921 residues: Collagen alpha-1(IX) chain (921 aa).

The N-terminal stretch at 1 to 23 (MKTCWKIPVFFFVCSFLEPWASA) is a signal peptide. The segment at 24–268 (AVKRRPRFPV…ITPSQTTDER (245 aa)) is nonhelical region (NC4). 2 disulfide bridges follow: cysteine 44/cysteine 242 and cysteine 198/cysteine 252. In terms of domain architecture, Laminin G-like spans 50-244 (GQDDLPGFDL…LQWMLIHCDP (195 aa)). The N-linked (GlcNAc...) asparagine glycan is linked to asparagine 171. Residues aspartate 213, aspartate 215, and histidine 253 each contribute to the Zn(2+) site. Disordered regions lie at residues 254 to 759 (ELPA…APTD) and 783 to 905 (RPDS…EPAS). 8 consecutive Collagen-like domains span residues 269–324 (GPPG…TPGA), 325–356 (DGLT…GFPG), 358–403 (GIPG…GTIG), 416–472 (PPGR…GLRG), 473–516 (ITGI…AGPK), 587–643 (EKGS…GKLG), 655–712 (GPPG…GEPG), and 713–755 (LRGP…PPGR). Residues 269 to 405 (GPPGEQGPPG…PGPRGTIGFH (137 aa)) form a triple-helical region (COL3) region. Pro residues-rich tracts occupy residues 273–285 (EQGP…PPGV) and 298–307 (KGPPGPPGPA). Low complexity predominate over residues 368–383 (TAGLPGELGRVGPVGD). Over residues 387–398 (RGPPGPPGPPGP) the composition is skewed to pro residues. Residues 406 to 417 (DGDPLCPNACPP) form a nonhelical region (NC3) region. Residues 418 to 756 (GRSGYPGLPG…PGVQGPPGRA (339 aa)) are triple-helical region (COL2). Positions 479–489 (DKGEKGARGLD) are enriched in basic and acidic residues. 2 stretches are compositionally biased toward low complexity: residues 602 to 621 (NSGK…RGPQ) and 630 to 650 (LGPV…SPGL). A nonhelical region (NC2) region spans residues 757 to 786 (PTDQHIKQVCMRVIQEHFAEMAASLKRPDS). The segment at 787-901 (GATGLPGRPG…PGPPGLPGFC (115 aa)) is triple-helical region (COL1). Collagen-like domains follow at residues 790-847 (GLPG…GPPG) and 848-899 (RGPN…GLPG). Positions 794-804 (RPGPPGPPGPP) are enriched in pro residues. A compositionally biased stretch (basic and acidic residues) spans 833-845 (PKGDLGEKGERGP). Residues 888–897 (VPGPPGPPGL) show a composition bias toward pro residues. Positions 902–921 (EPASCTMQAGQRAFNKGPDP) are nonhelical region (NC1).

It belongs to the fibril-associated collagens with interrupted helices (FACIT) family. Heterotrimer of an alpha 1(IX), an alpha 2(IX) and an alpha 3(IX) chain. In terms of processing, covalently linked to the telopeptides of type II collagen by lysine-derived cross-links. Post-translationally, prolines at the third position of the tripeptide repeating unit (G-X-Y) are hydroxylated in some or all of the chains.

It is found in the secreted. The protein resides in the extracellular space. The protein localises to the extracellular matrix. Functionally, structural component of hyaline cartilage and vitreous of the eye. The polypeptide is Collagen alpha-1(IX) chain (COL9A1) (Homo sapiens (Human)).